Consider the following 619-residue polypeptide: Pentatricopeptide repeat-containing protein At3g22470, mitochondrial (619 aa).

The transit peptide at 1–28 (MIQRLIPLNRKASNFTQILEKGTSLLHY) directs the protein to the mitochondrion. PPR repeat units follow at residues 69-103 (TPID…GIEH), 104-138 (DMYT…GYEP), 139-173 (DTIT…KQRP), 174-208 (DLVT…GFQP), 209-243 (DEVT…NIKA), 244-278 (SVVQ…GIKA), 279-313 (DVVT…NIIP), 314-348 (DVVT…GIAP), 349-383 (DTIT…GCEP), 384-418 (DIVT…GLIP), 419-453 (NTIT…GVPP), 454-488 (SVVT…RMTL), 489-523 (GIGI…GVKP), 524-558 (DVVT…GCTP), and 559-593 (DDFT…GFSA).

This sequence belongs to the PPR family. P subfamily.

The protein resides in the mitochondrion. The protein is Pentatricopeptide repeat-containing protein At3g22470, mitochondrial of Arabidopsis thaliana (Mouse-ear cress).